A 364-amino-acid chain; its full sequence is tRNA 2-selenouridine synthase (364 aa).

In terms of domain architecture, Rhodanese spans 14–137 (LLADTPLIDV…LRQTAIQATW (124 aa)). The S-selanylcysteine intermediate role is filled by Cys97.

It belongs to the SelU family. In terms of assembly, monomer.

The enzyme catalyses 5-methylaminomethyl-2-thiouridine(34) in tRNA + selenophosphate + (2E)-geranyl diphosphate + H2O + H(+) = 5-methylaminomethyl-2-selenouridine(34) in tRNA + (2E)-thiogeraniol + phosphate + diphosphate. It carries out the reaction 5-methylaminomethyl-2-thiouridine(34) in tRNA + (2E)-geranyl diphosphate = 5-methylaminomethyl-S-(2E)-geranyl-thiouridine(34) in tRNA + diphosphate. It catalyses the reaction 5-methylaminomethyl-S-(2E)-geranyl-thiouridine(34) in tRNA + selenophosphate + H(+) = 5-methylaminomethyl-2-(Se-phospho)selenouridine(34) in tRNA + (2E)-thiogeraniol. The catalysed reaction is 5-methylaminomethyl-2-(Se-phospho)selenouridine(34) in tRNA + H2O = 5-methylaminomethyl-2-selenouridine(34) in tRNA + phosphate. Its function is as follows. Involved in the post-transcriptional modification of the uridine at the wobble position (U34) of tRNA(Lys), tRNA(Glu) and tRNA(Gln). Catalyzes the conversion of 2-thiouridine (S2U-RNA) to 2-selenouridine (Se2U-RNA). Acts in a two-step process involving geranylation of 2-thiouridine (S2U) to S-geranyl-2-thiouridine (geS2U) and subsequent selenation of the latter derivative to 2-selenouridine (Se2U) in the tRNA chain. The polypeptide is tRNA 2-selenouridine synthase (Salmonella enteritidis).